Reading from the N-terminus, the 182-residue chain is MKIIISGPPGSGKSSVAKILSSKLSIKYVSAGLIFRDLAKRMNIDIVKLNKLAEDDFEIDKKIDLEMFKLIKSQDNVIIESHIGGWLFHNLSDLSIYLRAPLDVRAKRIASRDHISEDEAIIQIIKRERSHRERFLRYYGIDILDLSVFDLVINTSYLLPEDVADIILGVISRKNLHSALSH.

7–15 is a binding site for ATP; it reads GPPGSGKSS.

This sequence belongs to the cytidylate kinase family. Type 2 subfamily.

The protein resides in the cytoplasm. The enzyme catalyses CMP + ATP = CDP + ADP. The catalysed reaction is dCMP + ATP = dCDP + ADP. In Sulfolobus acidocaldarius (strain ATCC 33909 / DSM 639 / JCM 8929 / NBRC 15157 / NCIMB 11770), this protein is Cytidylate kinase (cmk).